Reading from the N-terminus, the 403-residue chain is G2/mitotic-specific cyclin-B3 (403 aa).

Disordered regions lie at residues 1-86 (MPVA…APPA) and 102-122 (RKTPPADVPVEPEKDSVPEEP). Positions 7–25 (SKAQSSKQPRASKAPSVTE) are enriched in polar residues. Positions 51 to 59 (RSAFGDITN) match the D-box motif.

It belongs to the cyclin family. Cyclin AB subfamily. As to quaternary structure, interacts with the CDK1 and CDK2 protein kinases. Post-translationally, ubiquitinated, leading to its degradation.

It localises to the nucleus. Cyclins are positive regulatory subunits of the cyclin-dependent kinases (CDKs), and thereby play an essential role in the control of the cell cycle, notably via their destruction during cell division. Could be involved at the G2/M (mitosis or meiosis) transition. G2/M cyclins accumulate steadily during G2 and are abruptly destroyed at mitosis. The sequence is that of G2/mitotic-specific cyclin-B3 (CCNB3) from Gallus gallus (Chicken).